Here is a 76-residue protein sequence, read N- to C-terminus: Protein A9 homolog (76 aa).

The N-terminal stretch at 1-21 (MSCYSSILNSISTLAFLQVAS) is a signal peptide. The Intravirion portion of the chain corresponds to 23–45 (VIELVRHCIMHFCETRIRCNTLA). Residues 46-66 (FVILKILITMVIYFMIGLGLF) form a helical membrane-spanning segment. Residues 67-76 (YLAKNGTEAE) lie on the Virion surface side of the membrane. Asparagine 71 carries N-linked (GlcNAc...) asparagine; by host glycosylation.

It belongs to the chordopoxvirinae A9 family.

It is found in the virion membrane. It localises to the host cytoplasm. In terms of biological role, envelope protein. Required for an early step in virion morphogenesis. The chain is Protein A9 homolog from Fowlpox virus (strain NVSL) (FPV).